The sequence spans 819 residues: Deubiquitinase MYSM1 (819 aa).

A compositionally biased stretch (acidic residues) spans 1 to 12; the sequence is MEAEEADVDVEG. The segment at 1-29 is disordered; sequence MEAEEADVDVEGDVAAAAQPGNDESTASV. Phosphoserine is present on Ser107. Residues 113 to 164 enclose the SANT domain; that stretch reads SHSVKWTVEEKELFEQGLAKFGRRWTKIATLLKSRTVLQVKSYARQYFKNKV. Lys184 is covalently cross-linked (Glycyl lysine isopeptide (Lys-Gly) (interchain with G-Cter in SUMO2)). Ser215 is modified (phosphoserine). 3 disordered regions span residues 228-247, 260-279, and 318-347; these read ELTSQTSQNSGSHLTLDVPN, QEGPLAKSSGESLQNVKQGE, and LHRGEVREEAKHSPSPEPCERQDSSGNEML. The segment covering 230–240 has biased composition (polar residues); that stretch reads TSQTSQNSGSH. A Phosphothreonine modification is found at Thr233. The span at 318–340 shows a compositional bias: basic and acidic residues; sequence LHRGEVREEAKHSPSPEPCERQD. Ser332 carries the phosphoserine modification. Residues 363-461 enclose the SWIRM domain; sequence LKPPEQEVEI…FGCEQAVYNR (99 aa). The region spanning 568–700 is the MPN domain; sequence VKVAAEALLI…PLPYSQITCL (133 aa). Zn(2+)-binding residues include His647, His649, and Asp660. Residues 647–660 carry the JAMM motif motif; that stretch reads HSHPAFDPNPSLRD. Residues 765–769 carry the LXXLL motif motif; it reads LQKLL.

This sequence belongs to the peptidase M67A family. MYSM1 subfamily. In terms of assembly, component of a large chromatin remodeling complex, at least composed of MYSM1, PCAF, RBM10 and KIF11/TRIP5. Binds histones.

The protein resides in the nucleus. It is found in the cytoplasm. Metalloprotease with deubiquitinase activity that plays important regulator roles in hematopoietic stem cell function, blood cell production and immune response. Participates in the normal programming of B-cell responses to antigen after the maturation process. Within the cytoplasm, plays critical roles in the repression of innate immunity and autoimmunity. Removes 'Lys-63'-linked polyubiquitins from TRAF3 and TRAF6 complexes. Attenuates NOD2-mediated inflammation and tissue injury by promoting 'Lys-63'-linked deubiquitination of RIPK2 component. Suppresses the CGAS-STING1 signaling pathway by cleaving STING1 'Lys-63'-linked ubiquitin chains. In the nucleus, acts as a hematopoietic transcription regulator derepressing a range of genes essential for normal stem cell differentiation including EBF1 and PAX5 in B-cells, ID2 in NK-cell progenitor or FLT3 in dendritic cell precursors. Deubiquitinates monoubiquitinated histone H2A, a specific tag for epigenetic transcriptional repression, leading to dissociation of histone H1 from the nucleosome. The sequence is that of Deubiquitinase MYSM1 (Mysm1) from Mus musculus (Mouse).